A 240-amino-acid polypeptide reads, in one-letter code: MKMMDANEIISFIQKSEKKTPVKVYIKGDLKEVTFPETVQAFVNKKSGVLFGEWSEIKTILDGNSKYIVDYVVENDRRNSAIPMLDLKGIKARIEPGAIIRDHVEIGDNAVIMMNATINIGAVIGEGSMIDMNAVLGGRATVGKNCHVGAGAVLAGVIEPPSAKPVIVEDDVVIGANVVVLEGVTVGKGAVVAAGAVVTEDVPPYTVVAGTPARVIKEIDEKTKAKTEIKQELRQLNPEK.

The protein belongs to the transferase hexapeptide repeat family. DapH subfamily.

The catalysed reaction is (S)-2,3,4,5-tetrahydrodipicolinate + acetyl-CoA + H2O = L-2-acetamido-6-oxoheptanedioate + CoA. It functions in the pathway amino-acid biosynthesis; L-lysine biosynthesis via DAP pathway; LL-2,6-diaminopimelate from (S)-tetrahydrodipicolinate (acetylase route): step 1/3. Catalyzes the transfer of an acetyl group from acetyl-CoA to tetrahydrodipicolinate. The protein is 2,3,4,5-tetrahydropyridine-2,6-dicarboxylate N-acetyltransferase of Bacillus thuringiensis (strain Al Hakam).